The sequence spans 490 residues: Betaine aldehyde dehydrogenase (490 aa).

Positions 27 and 93 each coordinate K(+). 150 to 152 is an NAD(+) binding site; sequence GAW. The active-site Charge relay system is K162. 176–179 contacts NAD(+); sequence KPSE. V180 contacts K(+). Position 230-233 (230-233) interacts with NAD(+); the sequence is GTTT. Position 246 (L246) interacts with K(+). E252 serves as the catalytic Proton acceptor. The NAD(+) site is built by G254, C286, and E387. The active-site Nucleophile is C286. Position 286 is a cysteine sulfenic acid (-SOH) (C286). K(+) is bound by residues K457 and G460. E464 acts as the Charge relay system in catalysis.

Belongs to the aldehyde dehydrogenase family. Dimer of dimers. K(+) serves as cofactor.

It carries out the reaction betaine aldehyde + NAD(+) + H2O = glycine betaine + NADH + 2 H(+). It functions in the pathway amine and polyamine biosynthesis; betaine biosynthesis via choline pathway; betaine from betaine aldehyde: step 1/1. Its function is as follows. Involved in the biosynthesis of the osmoprotectant glycine betaine. Catalyzes the irreversible oxidation of betaine aldehyde to the corresponding acid. The protein is Betaine aldehyde dehydrogenase of Pseudomonas entomophila (strain L48).